We begin with the raw amino-acid sequence, 213 residues long: Ribonuclease HII (213 aa).

Residues 20-209 (ELVAGVDEVG…VRQAYEALEG (190 aa)) enclose the RNase H type-2 domain. The a divalent metal cation site is built by Asp26, Glu27, and Asp118.

The protein belongs to the RNase HII family. Requires Mn(2+) as cofactor. It depends on Mg(2+) as a cofactor.

The protein resides in the cytoplasm. The catalysed reaction is Endonucleolytic cleavage to 5'-phosphomonoester.. Endonuclease that specifically degrades the RNA of RNA-DNA hybrids. The sequence is that of Ribonuclease HII from Pseudomonas fluorescens (strain Pf0-1).